The primary structure comprises 311 residues: tRNA-cytidine(32) 2-sulfurtransferase (311 aa).

The short motif at Ser-47 to Ser-52 is the PP-loop motif element. The [4Fe-4S] cluster site is built by Cys-122, Cys-125, and Cys-213.

The protein belongs to the TtcA family. In terms of assembly, homodimer. It depends on Mg(2+) as a cofactor. [4Fe-4S] cluster is required as a cofactor.

The protein localises to the cytoplasm. The catalysed reaction is cytidine(32) in tRNA + S-sulfanyl-L-cysteinyl-[cysteine desulfurase] + AH2 + ATP = 2-thiocytidine(32) in tRNA + L-cysteinyl-[cysteine desulfurase] + A + AMP + diphosphate + H(+). The protein operates within tRNA modification. Its function is as follows. Catalyzes the ATP-dependent 2-thiolation of cytidine in position 32 of tRNA, to form 2-thiocytidine (s(2)C32). The sulfur atoms are provided by the cysteine/cysteine desulfurase (IscS) system. The protein is tRNA-cytidine(32) 2-sulfurtransferase of Shigella dysenteriae serotype 1 (strain Sd197).